A 686-amino-acid chain; its full sequence is LEAF RUST 10 DISEASE-RESISTANCE LOCUS RECEPTOR-LIKE PROTEIN KINASE-like 1.3 (686 aa).

The signal sequence occupies residues 1-33 (MFSPVLFRFSKPNSFLVLLFFLSYIHFLPCAQS). At 34 to 264 (QREPCDTLFR…AGLSKKGKIG (231 aa)) the chain is on the extracellular side. Residues Asn76, Asn93, Asn175, Asn190, and Asn236 are each glycosylated (N-linked (GlcNAc...) asparagine). The helical transmembrane segment at 265-285 (IGFASGFLGATLIGGCLLCIF) threads the bilayer. Residues 286 to 686 (IRRRKKLATQ…SSSNTTASSF (401 aa)) are Cytoplasmic-facing. Positions 358–633 (ENFSKELGDG…DEIVEVLRVI (276 aa)) constitute a Protein kinase domain. ATP is bound by residues 364–372 (LGDGGFGTV) and Lys386. Tyr432 is modified (phosphotyrosine). The Proton acceptor role is filled by Asp482. Residue Ser515 is modified to Phosphoserine. Phosphothreonine is present on residues Thr516 and Thr521. Tyr529 carries the post-translational modification Phosphotyrosine. Positions 657–686 (GLLKHGVPPPLSPETDKTTASSSNTTASSF) are disordered. Residues 674 to 686 (TTASSSNTTASSF) are compositionally biased toward low complexity.

The protein belongs to the protein kinase superfamily. Ser/Thr protein kinase family.

Its subcellular location is the cell membrane. It catalyses the reaction L-seryl-[protein] + ATP = O-phospho-L-seryl-[protein] + ADP + H(+). It carries out the reaction L-threonyl-[protein] + ATP = O-phospho-L-threonyl-[protein] + ADP + H(+). This is LEAF RUST 10 DISEASE-RESISTANCE LOCUS RECEPTOR-LIKE PROTEIN KINASE-like 1.3 from Arabidopsis thaliana (Mouse-ear cress).